Here is a 208-residue protein sequence, read N- to C-terminus: MSVGEGPDTKPTARGQPAAVGRVVVLSGPSAVGKSTVVRCLRERIPNLHFSVSATTRAPRPGEVDGVDYHFIDPTRFQQLIDQGELLEWAEIHGGLHRSGTLAQPVRAAAATGVPVLIEVDLAGARAIKKTMPEAVTVFLAPPSWQDLQARLIGRGTETADVIQRRLDTARIELAAQGDFDKVVVNRRLESACAELVSLLVGTAPGSP.

One can recognise a Guanylate kinase-like domain in the interval 21-201; it reads GRVVVLSGPS…ACAELVSLLV (181 aa). 28-35 contacts ATP; it reads GPSAVGKS.

This sequence belongs to the guanylate kinase family.

It localises to the cytoplasm. The enzyme catalyses GMP + ATP = GDP + ADP. Essential for recycling GMP and indirectly, cGMP. The sequence is that of Guanylate kinase (gmk) from Mycobacterium bovis (strain ATCC BAA-935 / AF2122/97).